We begin with the raw amino-acid sequence, 220 residues long: RING-H2 finger protein ATL77 (220 aa).

The helical transmembrane segment at 53 to 73 (LMLLSILLCGIICSLGLHYII) threads the bilayer. The RING-type; atypical zinc finger occupies 130–172 (CVICLSDFVAGEQLRVLPKCNHGFHLRCIDKWLTQHMTCPKCR).

This sequence belongs to the RING-type zinc finger family. ATL subfamily.

The protein resides in the membrane. It carries out the reaction S-ubiquitinyl-[E2 ubiquitin-conjugating enzyme]-L-cysteine + [acceptor protein]-L-lysine = [E2 ubiquitin-conjugating enzyme]-L-cysteine + N(6)-ubiquitinyl-[acceptor protein]-L-lysine.. It functions in the pathway protein modification; protein ubiquitination. This chain is RING-H2 finger protein ATL77 (ATL77), found in Arabidopsis thaliana (Mouse-ear cress).